Here is a 624-residue protein sequence, read N- to C-terminus: Ubiquitin carboxyl-terminal hydrolase 16 (624 aa).

Positions valine 46–glutamate 620 constitute a USP domain. The active-site Nucleophile is cysteine 55. Histidine 424 acts as the Proton acceptor in catalysis. The tract at residues serine 453–alanine 573 is disordered. Residues serine 479 to serine 496 are compositionally biased toward low complexity. The segment covering valine 518–aspartate 544 has biased composition (polar residues). Over residues alanine 546–alanine 573 the composition is skewed to low complexity.

It belongs to the peptidase C19 family.

The enzyme catalyses Thiol-dependent hydrolysis of ester, thioester, amide, peptide and isopeptide bonds formed by the C-terminal Gly of ubiquitin (a 76-residue protein attached to proteins as an intracellular targeting signal).. The protein is Ubiquitin carboxyl-terminal hydrolase 16 (ubp16) of Emericella nidulans (strain FGSC A4 / ATCC 38163 / CBS 112.46 / NRRL 194 / M139) (Aspergillus nidulans).